Reading from the N-terminus, the 225-residue chain is MRLTPKELDKLMLHYAGALAKSRKERGIKLNYVESIALISMEIMELAREGNKSVAELMQQGREILKADEVMEGVASMVNEVQVEVSFPDGTKLVTIHNPIEDNGKLTPGEYILKDEDITLNANKESISIKVTHKGDRPIQVGSHFHFFEVNALLEFDRAQAFGKRLDIASGTSVRFEPGEEKNVNLIDFGGKQKIIGFNDLTNAHINKENKEQCLANAAQKHFIH.

The segment at 1-102 (MRLTPKELDK…LVTIHNPIED (102 aa)) is urease gamma. Positions 103–225 (NGKLTPGEYI…ANAAQKHFIH (123 aa)) are urease beta.

This sequence in the N-terminal section; belongs to the urease gamma subunit family. In the C-terminal section; belongs to the urease beta subunit family. In terms of assembly, heterohexamer of 3 UreA (alpha) and 3 UreB (beta) subunits.

The protein resides in the cytoplasm. It catalyses the reaction urea + 2 H2O + H(+) = hydrogencarbonate + 2 NH4(+). Its pathway is nitrogen metabolism; urea degradation; CO(2) and NH(3) from urea (urease route): step 1/1. The sequence is that of Urease subunit alpha from Helicobacter hepaticus (strain ATCC 51449 / 3B1).